Consider the following 346-residue polypeptide: Low specificity L-threonine aldolase (346 aa).

Lys-207 carries the post-translational modification N6-(pyridoxal phosphate)lysine.

The protein belongs to the threonine aldolase family. Homotetramer. Pyridoxal 5'-phosphate is required as a cofactor.

The catalysed reaction is L-threonine = acetaldehyde + glycine. It catalyses the reaction L-allo-threonine = acetaldehyde + glycine. Functionally, catalyzes the cleavage of L-allo-threonine and L-threonine to glycine and acetaldehyde. The chain is Low specificity L-threonine aldolase (ltaE) from Pseudomonas aeruginosa (strain ATCC 15692 / DSM 22644 / CIP 104116 / JCM 14847 / LMG 12228 / 1C / PRS 101 / PAO1).